Reading from the N-terminus, the 468-residue chain is FAD-linked oxidoreductase azaG (468 aa).

The signal sequence occupies residues 1–16 (MQLSGILSWLLSWLWA). Asparagine 44 carries an N-linked (GlcNAc...) asparagine glycan. Residues 54–228 (TVHGAPHYLG…TSATYRTHQA (175 aa)) form the FAD-binding PCMH-type domain. Asparagine 272, asparagine 348, and asparagine 464 each carry an N-linked (GlcNAc...) asparagine glycan.

This sequence belongs to the oxygen-dependent FAD-linked oxidoreductase family. It depends on FAD as a cofactor.

It functions in the pathway secondary metabolite biosynthesis. FAD-linked oxidoreductase; part of the gene cluster that mediates the biosynthesis of azaphilones, a class of fungal metabolites characterized by a highly oxygenated pyrano-quinone bicyclic core and exhibiting a broad range of bioactivities. In the first step, the non-reducing polyketide synthase azaA forms the hexaketide precursor from successive condensations of five malonyl-CoA units, presumably with a simple acetyl-CoA starter unit. The reactive polyketide chain then undergoes a PT-mediated C2-C7 cyclization to afford the aromatic ring and is eventually released as an aldehyde through the R-domain. The putative ketoreductase azaE is proposed to catalyze the reduction of the terminal ketone resulting in the early culture product FK17-P2a. The monooxygenase azaH was demonstrated to be the only enzyme required to convert FK17-P2a to azanigerone E. AzaH first hydroxylates the benzaldehyde intermediate FK17-P2a at C4, which triggers the formation of the pyran-ring to afford azanigerone E. In parallel, the 2,4-dimethylhexanoyl chain is synthesized by the HR-PKS azaB and is proposed to be transferred to the C4-hydroxyl of azanigerone E by the acyltransferase azaD directly from the ACP domain of azaB. Alternatively, the 2,4-dimethyl-hexanoyl chain may be offloaded from the HR-PKS as a carboxylic acid and converted to an acyl-CoA by azaF. The resulting acyl-CoA molecule could then be taken up as a substrate by AzaD to form azanigerone B. To yield the carboxylic acid substituent in azanigerone A, the hydroxypropyl side chain of azanigerone B would need to undergo a C-C oxidative cleavage catalyzed by cytochrome P450 AzaI. AzaI is proposed to act on a vicinal diol that leads to a C-C bond scission either through an alkoxyradical intermediate or a peroxy complex. In the biosynthesis of azanigerone A, azanigerone B first undergoes hydroxylation at C10, possibly catalyzed by one of the two FAD-dependent monooxygenases encoded in the cluster, azaG or azaL, resulting in the vicinal diol azanigerone C. Oxidative cleavage of azanigerone C by azaI would yield the corresponding aldehyde derivative of azanigerone A. Finally, the dehydrogenase azaJ is proposed to convert the aldehyde functional group into the carboxylic acid, completing the conversion from azanigerone B to azanigerone A. Alternatively, the oxidation of aldehyde to carboxylic acid may be catalyzed by the same P450 enzyme azaI via consecutive oxidation or by endogenous alcohol dehydrogenase. This chain is FAD-linked oxidoreductase azaG, found in Aspergillus niger (strain ATCC 1015 / CBS 113.46 / FGSC A1144 / LSHB Ac4 / NCTC 3858a / NRRL 328 / USDA 3528.7).